We begin with the raw amino-acid sequence, 310 residues long: N-acetyl-gamma-glutamyl-phosphate reductase (310 aa).

Cys-117 is a catalytic residue.

The protein belongs to the NAGSA dehydrogenase family. Type 2 subfamily.

It localises to the cytoplasm. The enzyme catalyses N-acetyl-L-glutamate 5-semialdehyde + phosphate + NADP(+) = N-acetyl-L-glutamyl 5-phosphate + NADPH + H(+). Its pathway is amino-acid biosynthesis; L-arginine biosynthesis; N(2)-acetyl-L-ornithine from L-glutamate: step 3/4. In terms of biological role, catalyzes the NADPH-dependent reduction of N-acetyl-5-glutamyl phosphate to yield N-acetyl-L-glutamate 5-semialdehyde. The chain is N-acetyl-gamma-glutamyl-phosphate reductase from Brucella suis (strain ATCC 23445 / NCTC 10510).